Consider the following 964-residue polypeptide: Translation initiation factor IF-2 (964 aa).

Positions 26–375 (AAGVSKRSPE…QNNQHAFQAP (350 aa)) are disordered. Composition is skewed to basic and acidic residues over residues 49-60 (YLKRSHGAREDS), 91-103 (VRPD…EAPK), 118-154 (AKPE…KPEP), 174-206 (IAAR…ERRQ), 225-236 (PQREERRDDRRG), 243-252 (RGPRGNDNRG), and 328-339 (KGGERSWDDNKK). Positions 464-633 (PRSPVVTVMG…LLQAEVLELK (170 aa)) constitute a tr-type G domain. Residues 473–480 (GHVDHGKT) are G1. 473–480 (GHVDHGKT) lines the GTP pocket. The segment at 498–502 (GITQH) is G2. The tract at residues 519-522 (DTPG) is G3. GTP contacts are provided by residues 519–523 (DTPGH) and 573–576 (NKID). The tract at residues 573 to 576 (NKID) is G4. The tract at residues 609–611 (SAK) is G5.

The protein belongs to the TRAFAC class translation factor GTPase superfamily. Classic translation factor GTPase family. IF-2 subfamily.

The protein localises to the cytoplasm. Functionally, one of the essential components for the initiation of protein synthesis. Protects formylmethionyl-tRNA from spontaneous hydrolysis and promotes its binding to the 30S ribosomal subunits. Also involved in the hydrolysis of GTP during the formation of the 70S ribosomal complex. This chain is Translation initiation factor IF-2, found in Chromobacterium violaceum (strain ATCC 12472 / DSM 30191 / JCM 1249 / CCUG 213 / NBRC 12614 / NCIMB 9131 / NCTC 9757 / MK).